A 554-amino-acid chain; its full sequence is Calcium-dependent protein kinase 3 (554 aa).

The interval 30-55 is disordered; that stretch reads KKKSSNKSIKSQHKFEGSKIANKNNE. Residues 110 to 365 form the Protein kinase domain; the sequence is NLSEEPLGKG…ASEALKHPWF (256 aa). ATP contacts are provided by residues 116–124 and Lys139; that span reads LGKGTYGCV. Asp230 serves as the catalytic Proton acceptor. The J domain autoinhibitory motif signature appears at 385 to 393; it reads NFKNYALLL. A j domain region spans residues 385–420; it reads NFKNYALLLKLQKLAMTIIAQQSNDYDLQQLKTVFL. The short motif at 394-403 is the J domain EF-hand interaction motif element; sequence KLQKLAMTII. EF-hand domains follow at residues 410–445, 448–479, 480–515, and 521–554; these read YDLQQLKTVFLYLDEDGKGNITKNQLKKGLENSGLK, QNFDVLLDQIDSDGSGRIDYTEFLAAALDRKH, LSKKLIYCAFRVFDVDNDGEITTAELAHILYNGNKK, and KDVNQVKKMIQEVDKNNDGKIDFYEFCEMMKLKY. Ca(2+) contacts are provided by Asp458, Asp460, Ser462, Arg464, Glu469, Asp493, Asp495, Asp497, Glu499, Glu504, Asp534, Asn536, Asp538, Lys540, and Glu545.

It belongs to the protein kinase superfamily. Ser/Thr protein kinase family. CDPK subfamily. Mg(2+) is required as a cofactor.

It localises to the cytoplasm. It carries out the reaction L-seryl-[protein] + ATP = O-phospho-L-seryl-[protein] + ADP + H(+). The catalysed reaction is L-threonyl-[protein] + ATP = O-phospho-L-threonyl-[protein] + ADP + H(+). Its activity is regulated as follows. Activated by calcium. Upon calcium binding to the EF-hand domain 2, the C-terminus of the junction domain (J domain) undergoes a conformational change which results in the dissociation of the pseudo-substrate inhibitory motif from the catalytic domain. This, in turn, may facilitate the autophosphorylation of the activation loop at Thr-271, which leads to the kinase activation. Calcium-dependent protein kinase which acts as a sensor and effector of intracellular Ca(2+) levels probably in part downstream of cGMP-activated PKG kinase. In the mosquito midgut, regulates the gliding motility of the ookinete which is essential for the ookinete to invade the midgut epithelium. However, another study showed that while required for ookinete invasion of the midgut epithelium, is not required for ookinete gliding motility. The polypeptide is Calcium-dependent protein kinase 3 (Plasmodium berghei (strain Anka)).